The chain runs to 273 residues: 2,3,4,5-tetrahydropyridine-2,6-dicarboxylate N-succinyltransferase (273 aa).

This sequence belongs to the transferase hexapeptide repeat family.

The protein localises to the cytoplasm. The catalysed reaction is (S)-2,3,4,5-tetrahydrodipicolinate + succinyl-CoA + H2O = (S)-2-succinylamino-6-oxoheptanedioate + CoA. The protein operates within amino-acid biosynthesis; L-lysine biosynthesis via DAP pathway; LL-2,6-diaminopimelate from (S)-tetrahydrodipicolinate (succinylase route): step 1/3. The chain is 2,3,4,5-tetrahydropyridine-2,6-dicarboxylate N-succinyltransferase from Acinetobacter baumannii (strain AB307-0294).